Reading from the N-terminus, the 65-residue chain is Pancreatic polypeptide prohormone (65 aa).

Y36 bears the Tyrosine amide mark. The propeptide occupies 59–65 (ELSPMGA).

It belongs to the NPY family.

Its subcellular location is the secreted. Hormone secreted by pancreatic cells that acts as a regulator of pancreatic and gastrointestinal functions probably by signaling through the G protein-coupled receptor NPY4R2. The protein is Pancreatic polypeptide prohormone (PPY) of Sus scrofa (Pig).